We begin with the raw amino-acid sequence, 228 residues long: NADH-quinone oxidoreductase subunit C (228 aa).

This sequence belongs to the complex I 30 kDa subunit family. In terms of assembly, NDH-1 is composed of 14 different subunits. Subunits NuoB, C, D, E, F, and G constitute the peripheral sector of the complex.

The protein resides in the cell membrane. It carries out the reaction a quinone + NADH + 5 H(+)(in) = a quinol + NAD(+) + 4 H(+)(out). Functionally, NDH-1 shuttles electrons from NADH, via FMN and iron-sulfur (Fe-S) centers, to quinones in the respiratory chain. The immediate electron acceptor for the enzyme in this species is believed to be a menaquinone. Couples the redox reaction to proton translocation (for every two electrons transferred, four hydrogen ions are translocated across the cytoplasmic membrane), and thus conserves the redox energy in a proton gradient. The chain is NADH-quinone oxidoreductase subunit C from Mycobacteroides abscessus (strain ATCC 19977 / DSM 44196 / CCUG 20993 / CIP 104536 / JCM 13569 / NCTC 13031 / TMC 1543 / L948) (Mycobacterium abscessus).